A 145-amino-acid polypeptide reads, in one-letter code: LIM domain only protein 3 (145 aa).

LIM zinc-binding domains are found at residues 11–73 (KGCA…LFGV) and 75–137 (GNCA…GLMK).

In Bos taurus (Bovine), this protein is LIM domain only protein 3 (LMO3).